Reading from the N-terminus, the 156-residue chain is Small ribosomal subunit protein uS7 (156 aa).

It belongs to the universal ribosomal protein uS7 family. In terms of assembly, part of the 30S ribosomal subunit. Contacts proteins S9 and S11.

Functionally, one of the primary rRNA binding proteins, it binds directly to 16S rRNA where it nucleates assembly of the head domain of the 30S subunit. Is located at the subunit interface close to the decoding center, probably blocks exit of the E-site tRNA. In Rhizobium etli (strain ATCC 51251 / DSM 11541 / JCM 21823 / NBRC 15573 / CFN 42), this protein is Small ribosomal subunit protein uS7.